Consider the following 435-residue polypeptide: 3-phosphoshikimate 1-carboxyvinyltransferase (435 aa).

Residues K21, S22, and R26 each coordinate 3-phosphoshikimate. K21 is a binding site for phosphoenolpyruvate. Phosphoenolpyruvate is bound by residues G99 and R127. Residues S173, Q175, D323, and K350 each contribute to the 3-phosphoshikimate site. Phosphoenolpyruvate is bound at residue Q175. The active-site Proton acceptor is the D323. Residues R354 and R396 each contribute to the phosphoenolpyruvate site.

Belongs to the EPSP synthase family. In terms of assembly, monomer.

Its subcellular location is the cytoplasm. It carries out the reaction 3-phosphoshikimate + phosphoenolpyruvate = 5-O-(1-carboxyvinyl)-3-phosphoshikimate + phosphate. It participates in metabolic intermediate biosynthesis; chorismate biosynthesis; chorismate from D-erythrose 4-phosphate and phosphoenolpyruvate: step 6/7. Functionally, catalyzes the transfer of the enolpyruvyl moiety of phosphoenolpyruvate (PEP) to the 5-hydroxyl of shikimate-3-phosphate (S3P) to produce enolpyruvyl shikimate-3-phosphate and inorganic phosphate. This Akkermansia muciniphila (strain ATCC BAA-835 / DSM 22959 / JCM 33894 / BCRC 81048 / CCUG 64013 / CIP 107961 / Muc) protein is 3-phosphoshikimate 1-carboxyvinyltransferase.